The primary structure comprises 582 residues: Poly(A) RNA polymerase, mitochondrial (582 aa).

The transit peptide at 1–37 (MAVPGVGLLTRLNLCARRRTRVQRPIVRLLSCPGTVA) directs the protein to the mitochondrion. Lysine 90 is subject to N6-acetyllysine. ATP-binding positions include 107–109 (YES) and 241–242 (GC). The Mg(2+) site is built by aspartate 243 and aspartate 245. The region spanning 437–483 (LELLLKEFFEYFGNFAFDKNSINIRQGREQNKPDSSPLYIQNPFETS) is the PAP-associated domain.

Belongs to the DNA polymerase type-B-like family. In terms of assembly, homodimer. It depends on Mg(2+) as a cofactor. The cofactor is Mn(2+). As to expression, ubiquitous, with stronger expression in tissues with high energy requirements: heart, brain, and skeletal muscle.

Its subcellular location is the cytoplasm. The protein resides in the mitochondrion. The catalysed reaction is RNA(n) + ATP = RNA(n)-3'-adenine ribonucleotide + diphosphate. In terms of biological role, polymerase that creates the 3' poly(A) tail of mitochondrial transcripts. Can use all four nucleotides, but has higher activity with ATP and UTP (in vitro). Plays a role in replication-dependent histone mRNA degradation. May be involved in the terminal uridylation of mature histone mRNAs before their degradation is initiated. Might be responsible for the creation of some UAA stop codons which are not encoded in mtDNA. The chain is Poly(A) RNA polymerase, mitochondrial (MTPAP) from Homo sapiens (Human).